The following is a 55-amino-acid chain: Spermatid nuclear transition protein 1 (55 aa).

Over residues Met-1–Lys-42 the composition is skewed to basic residues. The tract at residues Met-1–Leu-55 is disordered. 3 positions are modified to phosphoserine: Ser-36, Ser-37, and Ser-40.

Belongs to the nuclear transition protein 1 family. As to expression, testis.

It is found in the nucleus. The protein resides in the chromosome. In terms of biological role, plays a key role in the replacement of histones to protamine in the elongating spermatids of mammals. In condensing spermatids, loaded onto the nucleosomes, where it promotes the recruitment and processing of protamines, which are responsible for histone eviction. The polypeptide is Spermatid nuclear transition protein 1 (Tnp1) (Rattus norvegicus (Rat)).